The primary structure comprises 218 residues: Embryonic polyadenylate-binding protein 2-B (218 aa).

Disordered stretches follow at residues 1-24 (MSER…ELDD) and 169-218 (RTNM…NNPY). One can recognise an RRM domain in the interval 93 to 170 (RSVYVGNVDY…RTIKVLPKRT (78 aa)). The span at 198 to 209 (QRPRGRPFRGRG) shows a compositional bias: basic residues.

Homodimer; Upon poly(A) binding, undergoes a dimer-monomer transition that removes the polyproline motif from the RNA recognition site and allows it to be replaced by the adenosine nucleotides of poly(A).

The protein localises to the cytoplasm. Functionally, binds the poly(A) tail of mRNA. Unable to interact with the cap-binding complex and is therefore unlikely to be involved in translation initiation. The polypeptide is Embryonic polyadenylate-binding protein 2-B (Pabpn1l-b) (Xenopus laevis (African clawed frog)).